The following is a 376-amino-acid chain: Arabinogalactan endo-beta-1,4-galactanase (376 aa).

The N-terminal stretch at 1–17 (MKKKILAATAILLAAIA) is a signal peptide. Residue Glu161 is the Proton donor of the active site. The active-site Nucleophile is Glu270. Ca(2+)-binding residues include Asp281 and Asn285.

It belongs to the glycosyl hydrolase 53 family. Ca(2+) serves as cofactor.

The catalysed reaction is The enzyme specifically hydrolyzes (1-&gt;4)-beta-D-galactosidic linkages in type I arabinogalactans.. This Cellvibrio japonicus (strain Ueda107) (Pseudomonas fluorescens subsp. cellulosa) protein is Arabinogalactan endo-beta-1,4-galactanase (ganB).